We begin with the raw amino-acid sequence, 754 residues long: 5-methyltetrahydropteroyltriglutamate--homocysteine methyltransferase (754 aa).

Residues 17–20 and lysine 117 each bind 5-methyltetrahydropteroyltri-L-glutamate; that span reads RELK. L-homocysteine-binding positions include 431 to 433 and glutamate 484; that span reads IGS. Residues 431-433 and glutamate 484 each bind L-methionine; that span reads IGS. 5-methyltetrahydropteroyltri-L-glutamate is bound by residues 515-516 and tryptophan 561; that span reads RC. Residue aspartate 599 coordinates L-homocysteine. Residue aspartate 599 coordinates L-methionine. Residue glutamate 605 participates in 5-methyltetrahydropteroyltri-L-glutamate binding. Residues histidine 641, cysteine 643, and glutamate 665 each contribute to the Zn(2+) site. The active-site Proton donor is histidine 694. Cysteine 726 is a binding site for Zn(2+).

This sequence belongs to the vitamin-B12 independent methionine synthase family. Zn(2+) serves as cofactor.

It catalyses the reaction 5-methyltetrahydropteroyltri-L-glutamate + L-homocysteine = tetrahydropteroyltri-L-glutamate + L-methionine. Its pathway is amino-acid biosynthesis; L-methionine biosynthesis via de novo pathway; L-methionine from L-homocysteine (MetE route): step 1/1. Functionally, catalyzes the transfer of a methyl group from 5-methyltetrahydrofolate to homocysteine resulting in methionine formation. This chain is 5-methyltetrahydropteroyltriglutamate--homocysteine methyltransferase, found in Salmonella paratyphi A (strain ATCC 9150 / SARB42).